Consider the following 691-residue polypeptide: DNA ligase (691 aa).

NAD(+) is bound by residues 56–60 (DRAYD), 104–105 (SI), and Glu139. Residue Lys141 is the N6-AMP-lysine intermediate of the active site. NAD(+) is bound by residues Arg162, Glu198, Lys314, and Lys338. Cys429, Cys432, Cys445, and Cys451 together coordinate Zn(2+). Positions 607–691 (TAGDALSGQT…SLLESHGIEI (85 aa)) constitute a BRCT domain.

The protein belongs to the NAD-dependent DNA ligase family. LigA subfamily. Mg(2+) serves as cofactor. Mn(2+) is required as a cofactor.

The catalysed reaction is NAD(+) + (deoxyribonucleotide)n-3'-hydroxyl + 5'-phospho-(deoxyribonucleotide)m = (deoxyribonucleotide)n+m + AMP + beta-nicotinamide D-nucleotide.. Functionally, DNA ligase that catalyzes the formation of phosphodiester linkages between 5'-phosphoryl and 3'-hydroxyl groups in double-stranded DNA using NAD as a coenzyme and as the energy source for the reaction. It is essential for DNA replication and repair of damaged DNA. In Natronomonas pharaonis (strain ATCC 35678 / DSM 2160 / CIP 103997 / JCM 8858 / NBRC 14720 / NCIMB 2260 / Gabara) (Halobacterium pharaonis), this protein is DNA ligase.